Consider the following 290-residue polypeptide: Ventral anterior homeobox 2 (290 aa).

Residues 1 to 17 (MGDGGAERDRGPARRAE) are compositionally biased toward basic and acidic residues. Residues 1-75 (MGDGGAERDR…GQPGPGEADH (75 aa)) form a disordered region. Positions 102–161 (PKRTRTSFTAEQLYRLEMEFQRCQYVVGRERTELARQLNLSETQVKVWFQNRRTKQKKDQ) form a DNA-binding region, homeobox. A disordered region spans residues 205–240 (PSLPGLPASHRGTSLGDPRNSSPRLNPLSSASASPP). Over residues 222–238 (PRNSSPRLNPLSSASAS) the composition is skewed to low complexity.

This sequence belongs to the EMX homeobox family.

It is found in the nucleus. Its function is as follows. Transcription factor that may function in dorsoventral specification of the forebrain. Regulates the expression of Wnt signaling antagonists including the expression of a truncated TCF7L2 isoform that cannot bind CTNNB1 and acts therefore as a potent dominant-negative Wnt antagonist. Plays a crucial role in eye development and, in particular, in the specification of the ventral optic vesicle. May be a regulator of axial polarization in the retina. The protein is Ventral anterior homeobox 2 (VAX2) of Homo sapiens (Human).